A 398-amino-acid chain; its full sequence is Stomatin-like protein 1 (398 aa).

The short motif at Gly-6–Leu-10 is the Tyrosine-type lysosomal sorting signal element. Position 28 is a phosphoserine (Ser-28). Residues Leu-58–Ala-78 form a helical; Signal-anchor for type III membrane protein membrane-spanning segment. Topologically, residues Leu-79–Lys-398 are cytoplasmic. The 112-residue stretch at Lys-287–Lys-398 folds into the SCP2 domain.

This sequence belongs to the band 7/mec-2 family. Interacts with STOM; may redistribute STOM from the plasma membrane to late endosomes. Interacts with FBXW7 isoform 3 and CDK2. As to expression, ubiquitously expressed at low levels. Expression is highest in brain.

The protein resides in the membrane. It is found in the late endosome membrane. Its subcellular location is the membrane raft. The protein localises to the cell membrane. It localises to the cytoplasmic vesicle. In terms of biological role, may play a role in cholesterol transfer to late endosomes. May play a role in modulating membrane acid-sensing ion channels. Can specifically inhibit proton-gated current of ASIC1 isoform 1. Can increase inactivation speed of ASIC3. May be involved in regulation of proton sensing in dorsal root ganglions. May play a role in protecting FBXW7 isoform 3 from degradation. In Homo sapiens (Human), this protein is Stomatin-like protein 1 (STOML1).